We begin with the raw amino-acid sequence, 356 residues long: CMP-sialic acid transporter 2 (356 aa).

Positions 1–24 (MEYRRVKDQESYDVVSQKDIESPG) are enriched in basic and acidic residues. The segment at 1 to 43 (MEYRRVKDQESYDVVSQKDIESPGERSLSSTSATSSLSTAGAS) is disordered. The Cytoplasmic segment spans residues 1-52 (MEYRRVKDQESYDVVSQKDIESPGERSLSSTSATSSLSTAGASKGNNSWKLK). Positions 27–43 (SLSSTSATSSLSTAGAS) are enriched in low complexity. Residues 53-73 (SIVTLALTLLTSSQAILIVWS) form a helical membrane-spanning segment. The Lumenal segment spans residues 74-82 (KRAGKYEYS). A helical membrane pass occupies residues 83-103 (VTTANFSVEALKCLLSLIALY). Residues 104–125 (RTWNSQGVTEDNRLSTSFDEVS) are Cytoplasmic-facing. Residues 126–146 (VYPIPAILYMVKNLLQYYIFA) form a helical membrane-spanning segment. The Lumenal portion of the chain corresponds to 147 to 149 (YVD). Residues 150-172 (APAYQILKNLNIISTGVLYRIIL) traverse the membrane as a helical segment. At 173 to 175 (KKK) the chain is on the cytoplasmic side. A helical transmembrane segment spans residues 176–196 (LSEIQWAAFILLCAGCTTAQL). Topologically, residues 197–211 (NPSSDHVLQTPIQGW) are lumenal. A helical transmembrane segment spans residues 212–232 (VMAIVMALLSGFAGVYTEAII). The Cytoplasmic portion of the chain corresponds to 233–239 (KKRPSRN). The helical transmembrane segment at 240–260 (INVQNFWLYIFGMLFNLVAIC) threads the bilayer. The Lumenal portion of the chain corresponds to 261–277 (VQDFDAVMNKGFFHGYS). A helical transmembrane segment spans residues 278 to 298 (FITVLMILNHALSGIAVSMVM). The Cytoplasmic segment spans residues 299–314 (KYADNIVKVYSTSVAM). A helical transmembrane segment spans residues 315-335 (LLTAVVSVFLFGFHLSLAFFL). The Lumenal portion of the chain corresponds to 336–356 (GSTVVSVSVYLHSVGKPQPQK).

Belongs to the nucleotide-sugar transporter family. CMP-Sialate:CMP antiporter (TC 2.A.7.12) subfamily.

Its subcellular location is the golgi apparatus membrane. Sugar transporter involved in the transport of CMP-sialic acid from the cytoplasm into the Golgi. May transport important nucleotide sugars such as CMP-Kdo (2-keto-3-deoxy-D-manno-octulosonic acid) in physiological conditions. This is CMP-sialic acid transporter 2 from Oryza sativa subsp. indica (Rice).